The sequence spans 364 residues: Ribosomal RNA large subunit methyltransferase M (364 aa).

Residues Ser187, 220-223 (CPGG), Asp239, Asp259, and Asp276 contribute to the S-adenosyl-L-methionine site. The active-site Proton acceptor is Lys305.

This sequence belongs to the class I-like SAM-binding methyltransferase superfamily. RNA methyltransferase RlmE family. RlmM subfamily. As to quaternary structure, monomer.

The protein resides in the cytoplasm. It catalyses the reaction cytidine(2498) in 23S rRNA + S-adenosyl-L-methionine = 2'-O-methylcytidine(2498) in 23S rRNA + S-adenosyl-L-homocysteine + H(+). Catalyzes the 2'-O-methylation at nucleotide C2498 in 23S rRNA. In Aeromonas salmonicida (strain A449), this protein is Ribosomal RNA large subunit methyltransferase M.